A 394-amino-acid polypeptide reads, in one-letter code: Protein DDI1 homolog 2 (394 aa).

Residues 1–81 (MLITVYCVRR…VILRQRETPE (81 aa)) form the Ubiquitin-like domain. Residues 82 to 128 (ARPAAPFPGLDFSTIAVPGSSSQPAPSQPQAPPPPPPDTSSFPQGLD) form a disordered region. Positions 107–119 (PSQPQAPPPPPPD) are enriched in pro residues. Asp-247 is a catalytic residue. The Ubiquitin-binding motif lies at 371-390 (EEIADRELAEVLQKSAEEAD).

Belongs to the DDI1 family. Homodimer.

Its subcellular location is the cytoplasm. The protein resides in the cytosol. The protein localises to the chromosome. Its function is as follows. Aspartic protease that mediates the cleavage of NFE2L1/NRF1 at 'Leu-104', thereby promoting release of NFE2L1/NRF1 from the endoplasmic reticulum membrane. Ubiquitination of NFE2L1/NRF1 is a prerequisite for cleavage, suggesting that DDI2 specifically recognizes and binds ubiquitinated NFE2L1/NRF1. Seems to act as a proteasomal shuttle which links the proteasome and replication fork proteins like RTF2. Required for cellular survival following replication stress. This chain is Protein DDI1 homolog 2 (ddi2), found in Xenopus tropicalis (Western clawed frog).